The following is a 98-amino-acid chain: uncharacterized protein (98 aa).

It belongs to the CFAP97 family.

This is an uncharacterized protein from Homo sapiens (Human).